The primary structure comprises 432 residues: Adenylosuccinate synthetase (432 aa).

Residues 13-19 (GDEGKGK) and 41-43 (GHT) contribute to the GTP site. Residue aspartate 14 is the Proton acceptor of the active site. Mg(2+) is bound by residues aspartate 14 and glycine 41. IMP-binding positions include 14-17 (DEGK), 39-42 (NAGH), threonine 130, arginine 144, glutamine 225, threonine 240, and arginine 304. Catalysis depends on histidine 42, which acts as the Proton donor. 300 to 306 (ATTGRRR) contacts substrate. Residues arginine 306, 332-334 (KLD), and 415-417 (STG) contribute to the GTP site.

Belongs to the adenylosuccinate synthetase family. As to quaternary structure, homodimer. It depends on Mg(2+) as a cofactor.

It localises to the cytoplasm. The catalysed reaction is IMP + L-aspartate + GTP = N(6)-(1,2-dicarboxyethyl)-AMP + GDP + phosphate + 2 H(+). The protein operates within purine metabolism; AMP biosynthesis via de novo pathway; AMP from IMP: step 1/2. Plays an important role in the de novo pathway of purine nucleotide biosynthesis. Catalyzes the first committed step in the biosynthesis of AMP from IMP. This chain is Adenylosuccinate synthetase, found in Sodalis glossinidius (strain morsitans).